Consider the following 492-residue polypeptide: Glycogen synthase 1 (492 aa).

K15 serves as a coordination point for ADP-alpha-D-glucose.

This sequence belongs to the glycosyltransferase 1 family. Bacterial/plant glycogen synthase subfamily.

It carries out the reaction [(1-&gt;4)-alpha-D-glucosyl](n) + ADP-alpha-D-glucose = [(1-&gt;4)-alpha-D-glucosyl](n+1) + ADP + H(+). It functions in the pathway glycan biosynthesis; glycogen biosynthesis. In terms of biological role, synthesizes alpha-1,4-glucan chains using ADP-glucose. This chain is Glycogen synthase 1, found in Trichormus variabilis (strain ATCC 29413 / PCC 7937) (Anabaena variabilis).